We begin with the raw amino-acid sequence, 20 residues long: Elongation factor Tu (20 aa).

This sequence belongs to the GTP-binding elongation factor family. EF-Tu/EF-1A subfamily. In terms of assembly, monomer.

The protein resides in the cytoplasm. In terms of biological role, this protein promotes the GTP-dependent binding of aminoacyl-tRNA to the A-site of ribosomes during protein biosynthesis. This is Elongation factor Tu (tuf) from Mycoplasmopsis synoviae (Mycoplasma synoviae).